A 690-amino-acid chain; its full sequence is Glycine--tRNA ligase beta subunit (690 aa).

This sequence belongs to the class-II aminoacyl-tRNA synthetase family. In terms of assembly, tetramer of two alpha and two beta subunits.

It is found in the cytoplasm. The enzyme catalyses tRNA(Gly) + glycine + ATP = glycyl-tRNA(Gly) + AMP + diphosphate. In Desulfitobacterium hafniense (strain DSM 10664 / DCB-2), this protein is Glycine--tRNA ligase beta subunit.